Consider the following 910-residue polypeptide: Protein translocase subunit SecA (910 aa).

Residues Q87, 105–109 (GEGKT), and D508 contribute to the ATP site. Over residues 558–568 (RHESRRIDNQL) the composition is skewed to basic and acidic residues. Disordered stretches follow at residues 558–580 (RHES…DPGS) and 873–910 (AAQQ…GQLS). C894, C896, C905, and H906 together coordinate Zn(2+). The segment covering 900-910 (KKYKHCHGQLS) has biased composition (basic residues).

The protein belongs to the SecA family. In terms of assembly, monomer and homodimer. Part of the essential Sec protein translocation apparatus which comprises SecA, SecYEG and auxiliary proteins SecDF-YajC and YidC. Zn(2+) is required as a cofactor.

It is found in the cell inner membrane. Its subcellular location is the cytoplasm. It catalyses the reaction ATP + H2O + cellular proteinSide 1 = ADP + phosphate + cellular proteinSide 2.. In terms of biological role, part of the Sec protein translocase complex. Interacts with the SecYEG preprotein conducting channel. Has a central role in coupling the hydrolysis of ATP to the transfer of proteins into and across the cell membrane, serving both as a receptor for the preprotein-SecB complex and as an ATP-driven molecular motor driving the stepwise translocation of polypeptide chains across the membrane. The sequence is that of Protein translocase subunit SecA from Stenotrophomonas maltophilia (strain R551-3).